Consider the following 283-residue polypeptide: Bis(5'-nucleosyl)-tetraphosphatase, symmetrical (283 aa).

It belongs to the Ap4A hydrolase family.

It catalyses the reaction P(1),P(4)-bis(5'-adenosyl) tetraphosphate + H2O = 2 ADP + 2 H(+). Functionally, hydrolyzes diadenosine 5',5'''-P1,P4-tetraphosphate to yield ADP. In Cronobacter sakazakii (strain ATCC BAA-894) (Enterobacter sakazakii), this protein is Bis(5'-nucleosyl)-tetraphosphatase, symmetrical.